A 694-amino-acid chain; its full sequence is E3 ubiquitin-protein ligase RNF169 (694 aa).

Composition is skewed to low complexity over residues 1–20 and 33–46; these read MAAAGPSTRASSAAAAAALS and AAKAGAPGPASSPA. Positions 1–46 are disordered; the sequence is MAAAGPSTRASSAAAAAALSRRGRRGRCDEMAAAKAGAPGPASSPA. Serine 12 bears the Phosphoserine mark. The RING-type zinc-finger motif lies at 61–97; sequence CTGCLETPGEVAALPCSHSRCRGCASRAAGPGCRRCR. The disordered stretch occupies residues 100 to 153; sequence GSGWARRRARDDGQAAAELMGERARRGQPEPCRPRRDGGAAASGPRPEPEPLAE. The span at 119–137 shows a compositional bias: basic and acidic residues; sequence MGERARRGQPEPCRPRRDG. A UMI motif motif is present at residues 192–200; sequence DDQIHKLLQ. Serine 234 and serine 236 each carry phosphoserine. A Glycyl lysine isopeptide (Lys-Gly) (interchain with G-Cter in SUMO2) cross-link involves residue lysine 273. Phosphoserine is present on serine 326. Lysine 349 is covalently cross-linked (Glycyl lysine isopeptide (Lys-Gly) (interchain with G-Cter in SUMO2)). 2 positions are modified to phosphoserine: serine 390 and serine 396. Threonine 397 carries the phosphothreonine modification. Residue serine 472 is modified to Phosphoserine. A Glycyl lysine isopeptide (Lys-Gly) (interchain with G-Cter in SUMO2) cross-link involves residue lysine 498. The interval 515–537 is disordered; sequence TCHSSEHGGASSGPSLEREQCEE. A Phosphothreonine modification is found at threonine 541. Serine 630 is modified (phosphoserine). The MIU motif motif lies at 651–668; it reads QEEEDQQLALQSHRMFDS. The short motif at 675 to 687 is the LR motif element; the sequence is RRKGSVDQYLLRS. Serine 679 is subject to Phosphoserine.

This sequence belongs to the RNF169 family. As to quaternary structure, interacts with DYRK1B. In terms of processing, phosphorylated by DYRK1A; phosphorylation increases RNF169 ability to block accumulation of TP53BP1 at the DSB sites.

The protein localises to the chromosome. Its subcellular location is the nucleus. It localises to the nucleoplasm. It catalyses the reaction S-ubiquitinyl-[E2 ubiquitin-conjugating enzyme]-L-cysteine + [acceptor protein]-L-lysine = [E2 ubiquitin-conjugating enzyme]-L-cysteine + N(6)-ubiquitinyl-[acceptor protein]-L-lysine.. Its pathway is protein modification; protein ubiquitination. Probable E3 ubiquitin-protein ligase that acts as a regulator of double-strand breaks (DSBs) repair following DNA damage. Functions in a non-canonical fashion to harness RNF168-mediated protein recruitment to DSB-containing chromatin, thereby contributing to regulation of DSB repair pathway utilization. Once recruited to DSB repair sites by recognizing and binding ubiquitin catalyzed by RNF168, competes with TP53BP1 and BRCA1 for association with RNF168-modified chromatin, thereby favouring homologous recombination repair (HRR) and single-strand annealing (SSA) instead of non-homologous end joining (NHEJ) mediated by TP53BP1. E3 ubiquitin-protein ligase activity is not required for regulation of DSBs repair. The chain is E3 ubiquitin-protein ligase RNF169 (Rnf169) from Mus musculus (Mouse).